The sequence spans 463 residues: Kynureninase 2 (463 aa).

Pyridoxal 5'-phosphate is bound by residues leucine 134, threonine 135, 162–165 (FPSD), aspartate 247, histidine 250, and tyrosine 272. Lysine 273 carries the post-translational modification N6-(pyridoxal phosphate)lysine. Pyridoxal 5'-phosphate-binding residues include tryptophan 312 and asparagine 340.

Belongs to the kynureninase family. As to quaternary structure, homodimer. Pyridoxal 5'-phosphate serves as cofactor.

Its subcellular location is the cytoplasm. It carries out the reaction L-kynurenine + H2O = anthranilate + L-alanine + H(+). The enzyme catalyses 3-hydroxy-L-kynurenine + H2O = 3-hydroxyanthranilate + L-alanine + H(+). It functions in the pathway amino-acid degradation; L-kynurenine degradation; L-alanine and anthranilate from L-kynurenine: step 1/1. The protein operates within cofactor biosynthesis; NAD(+) biosynthesis; quinolinate from L-kynurenine: step 2/3. In terms of biological role, catalyzes the cleavage of L-kynurenine (L-Kyn) and L-3-hydroxykynurenine (L-3OHKyn) into anthranilic acid (AA) and 3-hydroxyanthranilic acid (3-OHAA), respectively. The protein is Kynureninase 2 (bna5-2) of Aspergillus niger (strain ATCC MYA-4892 / CBS 513.88 / FGSC A1513).